The chain runs to 141 residues: PNKALITGFWSKVKVDEVGAEALGRLLVVYPWTQRFFEHFGDLSTADAVLGNAKVKAHGKKVLDSFSNGVQHLDDLKGTFAQLSELHCDKLHVDPENFRLLGNVLVVVLARHFGKEFTPELQAEFQKVVAGVASALAHRYH.

The Globin domain occupies 1–141 (PNKALITGFW…VASALAHRYH (141 aa)). Residues His-58 and His-87 each coordinate heme b.

It belongs to the globin family. As to quaternary structure, heterotetramer of two alpha chains and two beta chains. Red blood cells.

Involved in oxygen transport from the lung to the various peripheral tissues. This Ovis aries musimon (Mouflon) protein is Hemoglobin subunit beta-C (HBBC).